The following is a 635-amino-acid chain: Threonine--tRNA ligase (635 aa).

A TGS domain is found at 1-61 (MIQITLPDSS…SQDSALSIVT (61 aa)). Residues 242–533 (DHRKLGKELD…LIEEHAGALP (292 aa)) form a catalytic region. The Zn(2+) site is built by cysteine 333, histidine 384, and histidine 510.

This sequence belongs to the class-II aminoacyl-tRNA synthetase family. Homodimer. Requires Zn(2+) as cofactor.

Its subcellular location is the cytoplasm. The catalysed reaction is tRNA(Thr) + L-threonine + ATP = L-threonyl-tRNA(Thr) + AMP + diphosphate + H(+). In terms of biological role, catalyzes the attachment of threonine to tRNA(Thr) in a two-step reaction: L-threonine is first activated by ATP to form Thr-AMP and then transferred to the acceptor end of tRNA(Thr). Also edits incorrectly charged L-seryl-tRNA(Thr). This is Threonine--tRNA ligase from Polaromonas naphthalenivorans (strain CJ2).